Consider the following 387-residue polypeptide: 3-ketoacyl-CoA thiolase (387 aa).

Cys91 (acyl-thioester intermediate) is an active-site residue. Active-site proton acceptor residues include His343 and Cys373.

It belongs to the thiolase-like superfamily. Thiolase family. In terms of assembly, heterotetramer of two alpha chains (FadB) and two beta chains (FadA).

Its subcellular location is the cytoplasm. It carries out the reaction an acyl-CoA + acetyl-CoA = a 3-oxoacyl-CoA + CoA. It functions in the pathway lipid metabolism; fatty acid beta-oxidation. Its function is as follows. Catalyzes the final step of fatty acid oxidation in which acetyl-CoA is released and the CoA ester of a fatty acid two carbons shorter is formed. The chain is 3-ketoacyl-CoA thiolase from Shigella flexneri serotype 5b (strain 8401).